The primary structure comprises 248 residues: Large ribosomal subunit protein uL30A (248 aa).

The disordered stretch occupies residues 1-44 (MSQKKQKIQVEQKVPENVAKKTQRDSKLRDAVAKRRTERLAANK). The span at 8-41 (IQVEQKVPENVAKKTQRDSKLRDAVAKRRTERLA) shows a compositional bias: basic and acidic residues.

It belongs to the universal ribosomal protein uL30 family.

Its function is as follows. Binds to G-rich structures in 28S rRNA and in mRNAs. Plays a regulatory role in the translation apparatus; inhibits cell-free translation of mRNAs. The sequence is that of Large ribosomal subunit protein uL30A (Rpl7-1) from Paramecium tetraurelia.